The sequence spans 1150 residues: MAATYRLVVSTVNHYSSVVIDRRFEQAIHYCTGTCHTFTHGIDCIVVHHSVCADLLHIPVSQFKDADLNSMFLPHENGLSSAEGDYPQQAFTGIPRVKRGSTFQNTYNLKDIAGEAISFASGKIKEFSFEKLKNSNHAAYRKGRKVKSDSFNRRSVDLDLLCGHYNNDGNAPSFGLLRSSSVEEKPLSHRNSLDTNLTSMFLQNFSEEDLVTQILEKHKIDNFSSGTDIKMCLDILLKCSEDLKKCTDIIKQCIKKKSGSSISEGSGNDTISSSETVYMNVMTRLASYLKKLPFEFMQSGNNEALDLTELISNMPSLQLTPFSPVFGTEQPPKYEDVVQLSASDSGRFQTIELQNDKPNSRKMDTVQSIPNNSTNSLYNLEVNDPRTLKAVQVQSQSLTMNPLENVSSDDLMETLYIEEESDGKKALDKGQKTENGPSHELLKVNEHRAEFPEHATHLKKCPTPMQNEIGKIFEKSFVNLPKEDCKSKVSKFEEGDQRDFTNSSSQEEIDKLLMDLESFSQKMETSLREPLAKGKNSNFLNSHSQLTGQTLVDLEPKSKVSSPIEKVSPSCLTRIIETNGHKIEEEDRALLLRILESIEDFAQELVECKSSRGSLSQEKEMMQILQETLTTSSQANLSVCRSPVGDKAKDTTSAVLIQQTPEVIKIQNKPEKKPGTPLPPPATSPSSPRPLSPVPHVNNVVNAPLSINIPRFYFPEGLPDTCSNHEQTLSRIETAFMDIEEQKADIYEMGKIAKVCGCPLYWKAPMFRAAGGEKTGFVTAQSFIAMWRKLLNNHHDDASKFICLLAKPNCSSLEQEDFIPLLQDVVDTHPGLTFLKDAPEFHSRYITTVIQRIFYTVNRSWSGKITSTEIRKSNFLQTLALLEEEEDINQITDYFSYEHFYVIYCKFWELDTDHDLYISQADLSRYNDQASSSRIIERIFSGAVTRGKTIQKEGRMSYADFVWFLISEEDKRNPTSIEYWFRCMDVDGDGVLSMYELEYFYEEQCERMEAMGIEPLPFHDLLCQMLDLVKPAVDGKITLRDLKRCRMAHIFYDTFFNLEKYLDHEQRDPFAVQKDVENDGPEPSDWDRFAAEEYETLVAEESAQAQFQEGFEDYETDEPASPSEFGNKSNKILSASLPEKCGKLQSVDEE.

The disordered stretch occupies residues 661–693; sequence PEVIKIQNKPEKKPGTPLPPPATSPSSPRPLSP. Residues 676–693 show a composition bias toward pro residues; it reads TPLPPPATSPSSPRPLSP. 2 consecutive EF-hand domains span residues 758–793 and 972–1007; these read CPLY…LLNN and RNPT…QCER. The Ca(2+) site is built by D985, D987, D989, and E996. The tract at residues 1105-1132 is disordered; that stretch reads AQFQEGFEDYETDEPASPSEFGNKSNKI.

In terms of assembly, PP2A consists of a common heterodimeric core enzyme, composed of a 36 kDa catalytic subunit (subunit C) and a 65 kDa constant regulatory subunit (PR65 or subunit A), that associates with a variety of regulatory subunits. Proteins that associate with the core dimer include three families of regulatory subunits B (the R2/B/PR55/B55, R3/B''/PR72/PR130/PR59 and R5/B'/B56 families), the 48 kDa variable regulatory subunit, viral proteins, and cell signaling molecules. In terms of tissue distribution, expressed in heart, brain, placenta, lung, muscle and kidney.

In terms of biological role, the B regulatory subunit might modulate substrate selectivity and catalytic activity, and might also direct the localization of the catalytic enzyme to a particular subcellular compartment. The protein is Serine/threonine-protein phosphatase 2A regulatory subunit B'' subunit alpha (PPP2R3A) of Homo sapiens (Human).